Here is a 119-residue protein sequence, read N- to C-terminus: Ig heavy chain V region T601 (119 aa).

The Ig-like domain occupies 1–112 (EVKLLESGGG…GYFDVWGAGT (112 aa)).

The polypeptide is Ig heavy chain V region T601 (Mus musculus (Mouse)).